Here is a 618-residue protein sequence, read N- to C-terminus: Grainyhead-like protein 1 homolog (618 aa).

Residues 1–91 form a transcription activation region; that stretch reads MTQEYDNKRP…EGEHPEPEHS (91 aa). Positions 76–92 are enriched in basic and acidic residues; the sequence is SSAVKPEGEHPEPEHSK. Positions 76–100 are disordered; the sequence is SSAVKPEGEHPEPEHSKRNSIPNVT. Phosphothreonine is present on Thr-208. The Grh/CP2 DB domain maps to 248 to 474; that stretch reads SGNNFEYTLE…DLDTQPVLFI (227 aa). 2 interaction with DNA regions span residues 380 to 389 and 427 to 430; these read TDFSSQKGVK and RKIR.

It belongs to the grh/CP2 family. Grainyhead subfamily. As to quaternary structure, binds DNA as homodimer. Homodimer, also forms heterodimers with GRHL2 or GRHL3. Post-translationally, methylation at Arg-9 and Lys-116 may be involved in regulating transcriptional activation. Isoform 1 is highly expressed in brain, pancreas, tonsil, placenta and kidney. Isoform 2 is highly expressed in brain and liver. Expression in the skin is confined to the suprabasal layers of the epidermis and to the hair follicles.

It is found in the nucleus. In terms of biological role, transcription factor involved in epithelial development. Binds directly to the consensus DNA sequence 5'-AACCGGTT-3'. Important regulator of DSG1 in the context of hair anchorage and epidermal differentiation, participates in the maintenance of the skin barrier. There is no genetic interaction with GRHL3, nor functional cooperativity due to diverse target gene selectivity during epithelia development. May play a role in regulating glucose homeostasis and insulin signaling. This is Grainyhead-like protein 1 homolog from Mus musculus (Mouse).